A 436-amino-acid chain; its full sequence is ATP-dependent protease ATPase subunit HslU (436 aa).

ATP-binding positions include I19, 61–65, D249, E314, and R386; that span reads GVGKT.

The protein belongs to the ClpX chaperone family. HslU subfamily. A double ring-shaped homohexamer of HslV is capped on each side by a ring-shaped HslU homohexamer. The assembly of the HslU/HslV complex is dependent on binding of ATP.

It localises to the cytoplasm. In terms of biological role, ATPase subunit of a proteasome-like degradation complex; this subunit has chaperone activity. The binding of ATP and its subsequent hydrolysis by HslU are essential for unfolding of protein substrates subsequently hydrolyzed by HslV. HslU recognizes the N-terminal part of its protein substrates and unfolds these before they are guided to HslV for hydrolysis. This Bartonella henselae (strain ATCC 49882 / DSM 28221 / CCUG 30454 / Houston 1) (Rochalimaea henselae) protein is ATP-dependent protease ATPase subunit HslU.